We begin with the raw amino-acid sequence, 465 residues long: Apolipoprotein N-acyltransferase (465 aa).

6 consecutive transmembrane segments (helical) span residues 12–32, 49–69, 80–100, 122–142, 161–181, and 189–209; these read AVLG…LSML, ALWG…LHPL, LPVA…LLLL, LLAL…LFWI, WLGS…LWQL, and CAWW…SLSP. The CN hydrolase domain occupies 221-448; the sequence is WQPAIPTREK…DAVAAAELQR (228 aa). The Proton acceptor role is filled by Glu-262. Lys-312 is an active-site residue. Cys-360 functions as the Nucleophile in the catalytic mechanism.

It belongs to the CN hydrolase family. Apolipoprotein N-acyltransferase subfamily.

It localises to the cell inner membrane. The catalysed reaction is N-terminal S-1,2-diacyl-sn-glyceryl-L-cysteinyl-[lipoprotein] + a glycerophospholipid = N-acyl-S-1,2-diacyl-sn-glyceryl-L-cysteinyl-[lipoprotein] + a 2-acyl-sn-glycero-3-phospholipid + H(+). The protein operates within protein modification; lipoprotein biosynthesis (N-acyl transfer). Functionally, catalyzes the phospholipid dependent N-acylation of the N-terminal cysteine of apolipoprotein, the last step in lipoprotein maturation. The protein is Apolipoprotein N-acyltransferase of Parasynechococcus marenigrum (strain WH8102).